The chain runs to 346 residues: Probable WRKY transcription factor 54 (346 aa).

The interval 109-130 (PVSCNGGDSGESKKKRLGVGKG) is disordered. Residues 121–130 (KKKRLGVGKG) are compositionally biased toward basic residues. The WRKY DNA-binding region spans 146–214 (VEAKSSEDRY…YIGYHTCTAN (69 aa)). The segment covering 267-282 (VKEEQNNNGDQSKDYY) has biased composition (basic and acidic residues). The tract at residues 267–286 (VKEEQNNNGDQSKDYYEGSS) is disordered.

The protein belongs to the WRKY group III family. Interacts with WRKY30. Binds to BZR2/BES1 to cooperatively regulate the expression of target genes. Interacts with ASK7/BIN2. Post-translationally, phosphorylated and destabilized by ASK7/BIN2. As to expression, expressed in leaves.

Its subcellular location is the nucleus. Functionally, transcription factor. Interacts specifically with the W box (5'-(T)TGAC[CT]-3'), a frequently occurring elicitor-responsive cis-acting element. Together with WRKY70, negative regulator of developmental senescence, probably via the regulation of several senescence-associated markers genes. Positive regulator of EDS1-dependent defense against E.amylovora. In collaboration with WRKY70, prevents stomatal closure and, consequently, osmotic stress tolerance. Together with WRKY46 and WRKY70, promotes brassinosteroid (BR)-regulated plant growth but prevent drought response by modulating gene expression. Negative regulator of SA biosynthesis. Prevents defense response to the necrotrophic pathogens P.carotovorum and B.cinerea, but promotes defense against biotrophic/hemibiotrophic pathogens P.syringae pv. tomato (Pst) DC3000, probably by regulating negatively the jasmonic acid (JA)/ethylene (ET) and positively the salicylic acid (SA) signaling pathways. The protein is Probable WRKY transcription factor 54 of Arabidopsis thaliana (Mouse-ear cress).